A 179-amino-acid polypeptide reads, in one-letter code: Hypoxanthine-guanine phosphoribosyltransferase (179 aa).

Lys42 and Gly43 together coordinate diphosphate. The Mg(2+) site is built by Glu98 and Asp99. The active-site Proton acceptor is Glu102. GMP is bound by residues Lys130, Phe151–Val152, and Asp158. Residue Arg164 coordinates diphosphate.

This sequence belongs to the purine/pyrimidine phosphoribosyltransferase family. Mg(2+) is required as a cofactor.

The protein localises to the cytoplasm. It carries out the reaction IMP + diphosphate = hypoxanthine + 5-phospho-alpha-D-ribose 1-diphosphate. The catalysed reaction is GMP + diphosphate = guanine + 5-phospho-alpha-D-ribose 1-diphosphate. Its pathway is purine metabolism; IMP biosynthesis via salvage pathway; IMP from hypoxanthine: step 1/1. It participates in purine metabolism; GMP biosynthesis via salvage pathway; GMP from guanine: step 1/1. Its function is as follows. Purine salvage pathway enzyme that catalyzes the transfer of the ribosyl-5-phosphate group from 5-phospho-alpha-D-ribose 1-diphosphate (PRPP) to the N9 position of the 6-oxopurines hypoxanthine and guanine to form the corresponding ribonucleotides IMP (inosine 5'-monophosphate) and GMP (guanosine 5'-monophosphate), with the release of PPi. The chain is Hypoxanthine-guanine phosphoribosyltransferase (hpt) from Staphylococcus epidermidis (strain ATCC 35984 / DSM 28319 / BCRC 17069 / CCUG 31568 / BM 3577 / RP62A).